We begin with the raw amino-acid sequence, 202 residues long: Small ribosomal subunit protein uS4 (202 aa).

Over residues 1-13 the composition is skewed to basic residues; the sequence is MSRYRGPRLRVTR. Positions 1–42 are disordered; sequence MSRYRGPRLRVTRRLGELPGLTRKASKKSNPPGQHGQARRKR. Residues 90 to 152 enclose the S4 RNA-binding domain; the sequence is NRLDNVCFRL…KASKKLVEGN (63 aa).

The protein belongs to the universal ribosomal protein uS4 family. As to quaternary structure, part of the 30S ribosomal subunit. Contacts protein S5. The interaction surface between S4 and S5 is involved in control of translational fidelity.

In terms of biological role, one of the primary rRNA binding proteins, it binds directly to 16S rRNA where it nucleates assembly of the body of the 30S subunit. With S5 and S12 plays an important role in translational accuracy. This Prochlorococcus marinus (strain MIT 9515) protein is Small ribosomal subunit protein uS4.